Consider the following 410-residue polypeptide: Cell death protein hid (410 aa).

4 disordered regions span residues 1-88 (MAVP…MQSP), 126-207 (FTGG…HMMP), 230-301 (NTAS…EATW), and 319-386 (QEFN…KKKP). 2 stretches are compositionally biased toward low complexity: residues 13–27 (DDVASSSSGASGNSS) and 35–70 (SSASSSVSSSGVSSASASSASSSSSASSDGASSAAS). The segment covering 71-88 (QSPNTTTSSATQTPMQSP) has biased composition (polar residues). Residues 134-145 (PHGHPNPNSNPH) show a composition bias toward low complexity. Residues 149 to 159 (PRTSVSFSSGE) are compositionally biased toward polar residues. The segment covering 170–189 (QPHPSYPAPSTPQPMPPQSA) has biased composition (pro residues). A compositionally biased stretch (low complexity) spans 230–242 (NTASAGTSSSSAA). Over residues 292-301 (EYQSDHEATW) the composition is skewed to basic and acidic residues. Position 295 is a phosphoserine (Ser295). A compositionally biased stretch (polar residues) spans 343–358 (PVCHTDSQPGGTSQAE). Basic and acidic residues predominate over residues 371 to 380 (QVERERQKAK).

To D.melanogaster grim and rpr. As to quaternary structure, interacts with Diap2 (via BIR2 and BIR3 domains).

In terms of biological role, activator of apoptosis, with grim and rpr, that acts on the effector Dredd. Seems to act genetically upstream of baculoviral anti-apoptotic p35. Blocks Diap2 from binding and inactivating the effector caspase Drice. Might regulate apoptosis downstream of Clbn/NEMF. The polypeptide is Cell death protein hid (hid) (Drosophila melanogaster (Fruit fly)).